The following is a 124-amino-acid chain: Small ribosomal subunit protein uS13 (124 aa).

Residues 93 to 117 are compositionally biased toward basic residues; it reads KNLPVRGQRTRTNARTRKGPRKTVA. The segment at 93 to 124 is disordered; the sequence is KNLPVRGQRTRTNARTRKGPRKTVANKKIESK.

Belongs to the universal ribosomal protein uS13 family. Part of the 30S ribosomal subunit. Forms a loose heterodimer with protein S19. Forms two bridges to the 50S subunit in the 70S ribosome.

In terms of biological role, located at the top of the head of the 30S subunit, it contacts several helices of the 16S rRNA. In the 70S ribosome it contacts the 23S rRNA (bridge B1a) and protein L5 of the 50S subunit (bridge B1b), connecting the 2 subunits; these bridges are implicated in subunit movement. Contacts the tRNAs in the A and P-sites. The sequence is that of Small ribosomal subunit protein uS13 from Mycoplasma genitalium (strain ATCC 33530 / DSM 19775 / NCTC 10195 / G37) (Mycoplasmoides genitalium).